A 196-amino-acid polypeptide reads, in one-letter code: DnaA initiator-associating protein DiaA (196 aa).

An SIS domain is found at 34-196; that stretch reads LVQSLLNGNK…DNTLFPHQDD (163 aa).

This sequence belongs to the SIS family. DiaA subfamily. As to quaternary structure, homotetramer; dimer of dimers.

Functionally, required for the timely initiation of chromosomal replication via direct interactions with the DnaA initiator protein. The protein is DnaA initiator-associating protein DiaA of Shigella flexneri serotype 5b (strain 8401).